The sequence spans 289 residues: Shikimate dehydrogenase (NADP(+)) (289 aa).

Shikimate is bound by residues 22-24 (SRS) and Thr69. Residue Lys73 is the Proton acceptor of the active site. Glu85 lines the NADP(+) pocket. Shikimate is bound by residues Asn94 and Asp109. NADP(+) contacts are provided by residues 134–138 (GAGGA), 158–163 (NRTLSR), and Ile226. Tyr228 serves as a coordination point for shikimate. Gly249 contributes to the NADP(+) binding site.

This sequence belongs to the shikimate dehydrogenase family. As to quaternary structure, homodimer.

It catalyses the reaction shikimate + NADP(+) = 3-dehydroshikimate + NADPH + H(+). It functions in the pathway metabolic intermediate biosynthesis; chorismate biosynthesis; chorismate from D-erythrose 4-phosphate and phosphoenolpyruvate: step 4/7. Its function is as follows. Involved in the biosynthesis of the chorismate, which leads to the biosynthesis of aromatic amino acids. Catalyzes the reversible NADPH linked reduction of 3-dehydroshikimate (DHSA) to yield shikimate (SA). This is Shikimate dehydrogenase (NADP(+)) from Brucella ovis (strain ATCC 25840 / 63/290 / NCTC 10512).